We begin with the raw amino-acid sequence, 346 residues long: Ribosomal RNA small subunit methyltransferase H (346 aa).

S-adenosyl-L-methionine-binding positions include 53 to 55, Asp-70, Phe-97, Asp-114, and Gln-121; that span reads GGY.

This sequence belongs to the methyltransferase superfamily. RsmH family.

It localises to the cytoplasm. The catalysed reaction is cytidine(1402) in 16S rRNA + S-adenosyl-L-methionine = N(4)-methylcytidine(1402) in 16S rRNA + S-adenosyl-L-homocysteine + H(+). Specifically methylates the N4 position of cytidine in position 1402 (C1402) of 16S rRNA. In Bartonella henselae (strain ATCC 49882 / DSM 28221 / CCUG 30454 / Houston 1) (Rochalimaea henselae), this protein is Ribosomal RNA small subunit methyltransferase H.